The following is a 190-amino-acid chain: dCTP deaminase (190 aa).

A dCTP-binding site is contributed by 113-118 (KSTYAR). The Proton donor/acceptor role is filled by Glu139. Gln158, Tyr172, Lys181, and Gln182 together coordinate dCTP.

It belongs to the dCTP deaminase family. Homotrimer.

It catalyses the reaction dCTP + H2O + H(+) = dUTP + NH4(+). It functions in the pathway pyrimidine metabolism; dUMP biosynthesis; dUMP from dCTP (dUTP route): step 1/2. Its function is as follows. Catalyzes the deamination of dCTP to dUTP. The chain is dCTP deaminase from Chlamydia trachomatis serovar L2 (strain ATCC VR-902B / DSM 19102 / 434/Bu).